Consider the following 420-residue polypeptide: Meiotically up-regulated gene 137 protein (420 aa).

Residues Asn10–Ile232 enclose the BAR domain. Residues Lys279 to Asp345 enclose the SH3 domain. Positions Ser398–Lys420 are disordered.

It is found in the cytoplasm. Its subcellular location is the nucleus. Its function is as follows. Has a role in meiosis and sporulation. The protein is Meiotically up-regulated gene 137 protein (mug137) of Schizosaccharomyces pombe (strain 972 / ATCC 24843) (Fission yeast).